The following is a 685-amino-acid chain: Glycine--tRNA ligase beta subunit (685 aa).

It belongs to the class-II aminoacyl-tRNA synthetase family. Tetramer of two alpha and two beta subunits.

Its subcellular location is the cytoplasm. It catalyses the reaction tRNA(Gly) + glycine + ATP = glycyl-tRNA(Gly) + AMP + diphosphate. This chain is Glycine--tRNA ligase beta subunit, found in Leuconostoc mesenteroides subsp. mesenteroides (strain ATCC 8293 / DSM 20343 / BCRC 11652 / CCM 1803 / JCM 6124 / NCDO 523 / NBRC 100496 / NCIMB 8023 / NCTC 12954 / NRRL B-1118 / 37Y).